A 433-amino-acid chain; its full sequence is Enolase (433 aa).

Gln167 is a (2R)-2-phosphoglycerate binding site. Glu209 acts as the Proton donor in catalysis. Mg(2+) is bound by residues Asp246, Glu291, and Asp318. The (2R)-2-phosphoglycerate site is built by Lys343, Arg372, Ser373, and Lys394. The active-site Proton acceptor is the Lys343.

The protein belongs to the enolase family. Component of the RNA degradosome, a multiprotein complex involved in RNA processing and mRNA degradation. Mg(2+) is required as a cofactor.

Its subcellular location is the cytoplasm. The protein localises to the secreted. It localises to the cell surface. The enzyme catalyses (2R)-2-phosphoglycerate = phosphoenolpyruvate + H2O. Its pathway is carbohydrate degradation; glycolysis; pyruvate from D-glyceraldehyde 3-phosphate: step 4/5. Functionally, catalyzes the reversible conversion of 2-phosphoglycerate (2-PG) into phosphoenolpyruvate (PEP). It is essential for the degradation of carbohydrates via glycolysis. The polypeptide is Enolase (Shewanella frigidimarina (strain NCIMB 400)).